We begin with the raw amino-acid sequence, 372 residues long: MNKILGLRRAKSAPLVPGAEKGKEKSVEETGFMTLAGRLRRGMQRLSRRGYGDNRRSRGSENNEQDPQPGDKIASPQRRDYTKSEASCRPGSGKTSPCGSSGTPCSDDAGGGRNGQENSGTRDTPCWMYKDSKSRYRVGVTPDLIPTIFGVSEVAASGLPRCRDKAAKRQPQSLLSPGVEALLVTIAESLETNGKRVSGRTAGKLWSWRVRDKAPERDYRNVTPTMFEGSCFGKPIRAGVFNAPRAYLDDLLGDHYFVPYLRRLPRDFTREETLSLRVATEAAVFANMLWEARHKNNFGAGVSYYPGALASATGTAPDFTDRGRSSLDSPYFASTFLPGIFVILPPGELPIDFMRLAVLLAVSAIETCVTTV.

2 stretches are compositionally biased toward basic residues: residues 1-11 (MNKILGLRRAK) and 38-48 (RLRRGMQRLSR). Residues 1–127 (MNKILGLRRA…NSGTRDTPCW (127 aa)) are disordered. Residues 50-61 (GYGDNRRSRGSE) are compositionally biased toward basic and acidic residues. Positions 93–104 (GKTSPCGSSGTP) are enriched in polar residues.

This is an uncharacterized protein from Psittacid herpesvirus 1 (isolate Amazon parrot/-/97-0001/1997) (PsHV-1).